The primary structure comprises 359 residues: Peptide chain release factor 1 (359 aa).

Glutamine 235 is modified (N5-methylglutamine).

This sequence belongs to the prokaryotic/mitochondrial release factor family. Methylated by PrmC. Methylation increases the termination efficiency of RF1.

The protein localises to the cytoplasm. Its function is as follows. Peptide chain release factor 1 directs the termination of translation in response to the peptide chain termination codons UAG and UAA. This Aromatoleum aromaticum (strain DSM 19018 / LMG 30748 / EbN1) (Azoarcus sp. (strain EbN1)) protein is Peptide chain release factor 1.